A 303-amino-acid chain; its full sequence is L(+)-tartrate dehydratase subunit alpha (303 aa).

Iron-sulfur cluster contacts are provided by Cys71, Cys190, and Cys277.

It belongs to the class-I fumarase family. As to quaternary structure, tetramer of two alpha and two beta subunits. It depends on iron-sulfur cluster as a cofactor.

The enzyme catalyses (2R,3R)-tartrate = oxaloacetate + H2O. This Escherichia coli O6:H1 (strain CFT073 / ATCC 700928 / UPEC) protein is L(+)-tartrate dehydratase subunit alpha (ttdA).